The chain runs to 181 residues: Thioredoxin-like protein CITRX2, chloroplastic (181 aa).

Residues 1–70 (MQAATLSFQP…PDVATGKYVR (70 aa)) constitute a chloroplast transit peptide. A Thioredoxin domain is found at 72-181 (DYLVKKVSAK…MMRDIINNDL (110 aa)). Catalysis depends on nucleophile residues cysteine 104 and cysteine 107. Cysteines 104 and 107 form a disulfide.

This sequence belongs to the thioredoxin family. Plant CITRX-type subfamily.

It is found in the plastid. The protein resides in the chloroplast. Its function is as follows. Probable thiol-disulfide oxidoreductase that may play a role in proper chloroplast development. This Nicotiana benthamiana protein is Thioredoxin-like protein CITRX2, chloroplastic.